Reading from the N-terminus, the 78-residue chain is uncharacterized protein (78 aa).

This is an uncharacterized protein from Amsacta (AmEPV).